Here is a 740-residue protein sequence, read N- to C-terminus: Death domain-associated protein 6 (740 aa).

The segment at 1–55 is disordered; sequence MATANSIIVLDDDDEDEAAAQPGPSHPLPNAASPGAEAPSSSEPHGARGSSSSGG. The segment at 1-160 is necessary for interaction with USP7 and ATRX; that stretch reads MATANSIIVL…TSNEPSGNNP (160 aa). Position 25 is a phosphoserine (serine 25). Low complexity predominate over residues 29 to 55; it reads PNAASPGAEAPSSSEPHGARGSSSSGG. Lysine 142 is covalently cross-linked (Glycyl lysine isopeptide (Lys-Gly) (interchain with G-Cter in SUMO2)). A disordered region spans residues 147-185; sequence PAATTSNEPSGNNPPTHLSLDPTNAENTASQSPRTRGSR. Residues 149 to 181 are compositionally biased toward polar residues; that stretch reads ATTSNEPSGNNPPTHLSLDPTNAENTASQSPRT. 2 positions are modified to phosphoserine: serine 178 and serine 213. Coiled coils occupy residues 180 to 217 and 358 to 399; these read RTRGSRRQIQRLEQLLALYVAEIRRLQEKELDLSELDD and ARRL…ARLQ. An interaction with histone H3.3 region spans residues 183–417; the sequence is GSRRQIQRLE…TPEASLDSGE (235 aa). The segment at 347–570 is necessary for interaction with USP7; sequence GVDPALSDPV…SPVSQLFELE (224 aa). Residues 384 to 724 are disordered; it reads DKSEEGERKK…PRPGTCKTSV (341 aa). Residues 391 to 395 carry the Nuclear localization signal motif; it reads RKKRR. 2 positions are modified to phosphoserine: serine 412 and serine 424. Residues 430-489 are a coiled coil; that stretch reads ASRAETDDEDDEESDEEEEEEEEEEEEEATDSEEEEDLEQMQEGQEDDEEEDEEEEAAAG. A compositionally biased stretch (acidic residues) spans 435–486; the sequence is TDDEDDEESDEEEEEEEEEEEEEATDSEEEEDLEQMQEGQEDDEEEDEEEEA. The residue at position 459 (threonine 459) is a Phosphothreonine. A phosphoserine mark is found at serine 495 and serine 498. Over residues 496–505 the composition is skewed to polar residues; sequence PMSSLQISNE. The interaction with MAP3K5 stretch occupies residues 501–625; the sequence is QISNEKNLEP…GVSPHNWGDS (125 aa). Lysine 512 carries the post-translational modification N6-acetyllysine. Over residues 514–524 the composition is skewed to polar residues; it reads ISRSSGEQQNK. Positions 529 to 542 are enriched in low complexity; it reads SPSLLSEEPLAPSS. Residues 551–561 show a composition bias toward acidic residues; sequence QPEELTLEEES. Residues serine 561 and serine 580 each carry the phosphoserine modification. Over residues 578–590 the composition is skewed to polar residues; it reads TPSSVETDISSSR. The interaction with SPOP stretch occupies residues 626–740; the sequence is GPPCKKSRKE…EEIIVLSDSD (115 aa). (Microbial infection) Interaction with Puumala hantavirus nucleoprotein regions lie at residues 627-634 and 658-663; these read PPCKKSRK and KNGKKI. The short motif at 628 to 634 is the Nuclear localization signal element; sequence PCKKSRK. Residues lysine 630 and lysine 631 each participate in a glycyl lysine isopeptide (Lys-Gly) (interchain with G-Cter in SUMO1) cross-link. The segment covering 650–660 has biased composition (basic and acidic residues); sequence ERQRSVHEKNG. Phosphoserine occurs at positions 668 and 671. Low complexity predominate over residues 673–683; the sequence is LASLAPVADSS. Phosphoserine is present on residues serine 688, serine 702, serine 737, and serine 739. A compositionally biased stretch (polar residues) spans 693 to 711; sequence LVTSSLCIPSPARLSQTPH. The segment at 733–740 is sumo interaction motif (SIM); the sequence is IIVLSDSD.

This sequence belongs to the DAXX family. Homomultimer. Interacts (via C-terminus) with TNFRSF6 (via death domain). Interacts with PAX5, SLC2A4/GLUT4, MAP3K5, TGFBR2, phosphorylated dimeric HSPB1/HSP27, CENPC, ETS1, sumoylated PML, UBE2I, MCRS1 and TP53. Interacts (via N-terminus) with HIPK2 and HIPK3. Interacts with HIPK1, which induces translocation from PML/POD/ND10 nuclear bodies to chromatin and enhances association with HDAC1. Interacts (non-phosphorylated) with PAX3, PAX7, DEK, HDAC1, HDAC2, HDAC3, acetylated histone H4 and histones H2A, H2B, H3, H3.3 and H4. Interacts with SPOP; mediating CUL3-dependent proteasomal degradation. Interacts with CBP; the interaction is dependent the sumoylation of CBP and suppresses CBP transcriptional activity via recruitment of HDAC2 directly in the complex with TP53 and HIPK2. Interacts with AXIN1; the interaction stimulates the interaction of DAXX with TP53, stimulates 'Ser-46' phosphorylation of TP53 on and induces cell death on UV irradiation. Interacts with MDM2; the interaction is direct. Interacts with USP7; the interaction is direct and independent of MDM2 and TP53. Part of a complex with DAXX, MDM2 and USP7 under non-stress conditions. Interacts (via N-terminus) with RASSF1 (via C-terminus); the interaction is independent of MDM2 and TP53; RASSF1 isoform A disrupts interactions among MDM2, DAXX and USP7, thus contributing to the efficient activation of TP53 by promoting MDM2 self-ubiquitination in cell-cycle checkpoint control in response to DNA damage. Interacts with ATRX to form the chromatin remodeling complex ATRX:DAXX. Interacts with HSF1 (via homotrimeric form preferentially); this interaction relieves homotrimeric HSF1 from repression of its transcriptional activity by HSP90-dependent multichaperone complex upon heat shock. Interacts with SUMO1P1/SUMO5. As to quaternary structure, (Microbial infection) Interacts with human cytomegalovirus/HHV-5 tegument phosphoprotein pp71 and protein UL123. In terms of assembly, (Microbial infection) Interacts with Epstein-Barr virus protein BNRF1. (Microbial infection) Interacts with human adenovirus 5 E1B-55K protein; this interaction might alterate the normal interactions of DAXX, PML, and TP53, which may contribute to cell transformation. As to quaternary structure, (Microbial infection) Interacts with Puumala hantavirus nucleoprotein. Post-translationally, sumoylated with SUMO1 on multiple lysine residues. Phosphorylated by HIPK1 upon glucose deprivation. In terms of processing, polyubiquitinated; which is promoted by CUL3 and SPOP and results in proteasomal degradation. Ubiquitinated by MDM2; inducing its degradation. Deubiquitinated by USP7; leading to stabilize it. In terms of tissue distribution, ubiquitous.

The protein resides in the cytoplasm. The protein localises to the nucleus. It localises to the nucleoplasm. Its subcellular location is the PML body. It is found in the nucleolus. The protein resides in the chromosome. The protein localises to the centromere. Its function is as follows. Transcription corepressor known to repress transcriptional potential of several sumoylated transcription factors. Down-regulates basal and activated transcription. Its transcription repressor activity is modulated by recruiting it to subnuclear compartments like the nucleolus or PML/POD/ND10 nuclear bodies through interactions with MCSR1 and PML, respectively. Seems to regulate transcription in PML/POD/ND10 nuclear bodies together with PML and may influence TNFRSF6-dependent apoptosis thereby. Inhibits transcriptional activation of PAX3 and ETS1 through direct protein-protein interactions. Modulates PAX5 activity; the function seems to involve CREBBP. Acts as an adapter protein in a MDM2-DAXX-USP7 complex by regulating the RING-finger E3 ligase MDM2 ubiquitination activity. Under non-stress condition, in association with the deubiquitinating USP7, prevents MDM2 self-ubiquitination and enhances the intrinsic E3 ligase activity of MDM2 towards TP53, thereby promoting TP53 ubiquitination and subsequent proteasomal degradation. Upon DNA damage, its association with MDM2 and USP7 is disrupted, resulting in increased MDM2 autoubiquitination and consequently, MDM2 degradation, which leads to TP53 stabilization. Acts as a histone chaperone that facilitates deposition of histone H3.3. Acts as a targeting component of the chromatin remodeling complex ATRX:DAXX which has ATP-dependent DNA translocase activity and catalyzes the replication-independent deposition of histone H3.3 in pericentric DNA repeats outside S-phase and telomeres, and the in vitro remodeling of H3.3-containing nucleosomes. Does not affect the ATPase activity of ATRX but alleviates its transcription repression activity. Upon neuronal activation associates with regulatory elements of selected immediate early genes where it promotes deposition of histone H3.3 which may be linked to transcriptional induction of these genes. Required for the recruitment of histone H3.3:H4 dimers to PML-nuclear bodies (PML-NBs); the process is independent of ATRX and facilitated by ASF1A; PML-NBs are suggested to function as regulatory sites for the incorporation of newly synthesized histone H3.3 into chromatin. In case of overexpression of centromeric histone variant CENPA (as found in various tumors) is involved in its mislocalization to chromosomes; the ectopic localization involves a heterotypic tetramer containing CENPA, and histones H3.3 and H4 and decreases binding of CTCF to chromatin. Proposed to mediate activation of the JNK pathway and apoptosis via MAP3K5 in response to signaling from TNFRSF6 and TGFBR2. Interaction with HSPB1/HSP27 may prevent interaction with TNFRSF6 and MAP3K5 and block DAXX-mediated apoptosis. In contrast, in lymphoid cells JNC activation and TNFRSF6-mediated apoptosis may not involve DAXX. Shows restriction activity towards human cytomegalovirus (HCMV). Plays a role as a positive regulator of the heat shock transcription factor HSF1 activity during the stress protein response. This is Death domain-associated protein 6 (DAXX) from Homo sapiens (Human).